Here is a 352-residue protein sequence, read N- to C-terminus: Lipopolysaccharide core biosynthesis mannosyltransferase LpcC (352 aa).

This sequence belongs to the glycosyltransferase group 1 family. Glycosyltransferase 4 subfamily.

It participates in bacterial outer membrane biogenesis; LPS core biosynthesis. In terms of biological role, acts at transfer of mannose group to a 3-deoxy-D-mono octulonic acid (KDO) via an alpha-1,5 linkage. The chain is Lipopolysaccharide core biosynthesis mannosyltransferase LpcC (lpcC) from Rhizobium leguminosarum bv. viciae.